The following is a 192-amino-acid chain: Phosphomevalonate kinase (192 aa).

Residues 17–23 and arginine 141 contribute to the ATP site; that span reads KRKSGKD. Asparagine 170 lines the substrate pocket. 3 residues coordinate ATP: histidine 171, arginine 176, and glutamine 180.

Monomer. In terms of tissue distribution, heart, liver, skeletal muscle, kidney, and pancreas. Lower level in brain, placenta and lung.

It localises to the cytoplasm. Its subcellular location is the cytosol. It carries out the reaction (R)-5-phosphomevalonate + ATP = (R)-5-diphosphomevalonate + ADP. It participates in isoprenoid biosynthesis; isopentenyl diphosphate biosynthesis via mevalonate pathway; isopentenyl diphosphate from (R)-mevalonate: step 2/3. Its function is as follows. Catalyzes the reversible ATP-dependent phosphorylation of mevalonate 5-phosphate to produce mevalonate diphosphate and ADP, a key step in the mevalonic acid mediated biosynthesis of isopentenyl diphosphate and other polyisoprenoid metabolites. This is Phosphomevalonate kinase (PMVK) from Homo sapiens (Human).